The chain runs to 168 residues: G/U mismatch-specific DNA glycosylase (168 aa).

Belongs to the uracil-DNA glycosylase (UDG) superfamily. TDG/mug family. Binds DNA as a monomer.

The protein localises to the cytoplasm. It catalyses the reaction Specifically hydrolyzes mismatched double-stranded DNA and polynucleotides, releasing free uracil.. In terms of biological role, excises ethenocytosine and uracil, which can arise by alkylation or deamination of cytosine, respectively, from the corresponding mispairs with guanine in ds-DNA. It is capable of hydrolyzing the carbon-nitrogen bond between the sugar-phosphate backbone of the DNA and the mispaired base. The complementary strand guanine functions in substrate recognition. Required for DNA damage lesion repair in stationary-phase cells. The polypeptide is G/U mismatch-specific DNA glycosylase (Escherichia coli O157:H7 (strain EC4115 / EHEC)).